Reading from the N-terminus, the 188-residue chain is Elongation factor P (188 aa).

It belongs to the elongation factor P family.

Its subcellular location is the cytoplasm. It participates in protein biosynthesis; polypeptide chain elongation. In terms of biological role, involved in peptide bond synthesis. Stimulates efficient translation and peptide-bond synthesis on native or reconstituted 70S ribosomes in vitro. Probably functions indirectly by altering the affinity of the ribosome for aminoacyl-tRNA, thus increasing their reactivity as acceptors for peptidyl transferase. This chain is Elongation factor P, found in Gluconacetobacter diazotrophicus (strain ATCC 49037 / DSM 5601 / CCUG 37298 / CIP 103539 / LMG 7603 / PAl5).